The chain runs to 81 residues: MSGSTGERPFGDIVTSIRYWIIHSITIPMLFIAGWLFVSTGLAYDVFGTPRPDEYYTQERQELPIINDRFEAKNQIEQFNQ.

A helical membrane pass occupies residues 21–35 (IIHSITIPMLFIAGW). Heme is bound at residue His-23.

Belongs to the PsbE/PsbF family. In terms of assembly, heterodimer of an alpha subunit and a beta subunit. PSII is composed of 1 copy each of membrane proteins PsbA, PsbB, PsbC, PsbD, PsbE, PsbF, PsbH, PsbI, PsbJ, PsbK, PsbL, PsbM, PsbT, PsbX, PsbY, PsbZ, Psb30/Ycf12, peripheral proteins PsbO, CyanoQ (PsbQ), PsbU, PsbV and a large number of cofactors. It forms dimeric complexes. The cofactor is heme b.

It is found in the cellular thylakoid membrane. Functionally, this b-type cytochrome is tightly associated with the reaction center of photosystem II (PSII). PSII is a light-driven water:plastoquinone oxidoreductase that uses light energy to abstract electrons from H(2)O, generating O(2) and a proton gradient subsequently used for ATP formation. It consists of a core antenna complex that captures photons, and an electron transfer chain that converts photonic excitation into a charge separation. This Microcystis aeruginosa (strain NIES-843 / IAM M-2473) protein is Cytochrome b559 subunit alpha.